Here is a 241-residue protein sequence, read N- to C-terminus: MLTRKIKLWDINAHITCRLCSGYLIDATTVTECLHTFCRSCLVKYLEENNTCPTCRIVIHQSHPLQYIGHDRTMQDIVYKLVPGLQEAEMRKQREFYHKLGMEVPGDIKGEACSAKQHLDPRNGETKADDNSNKETAEEKQEEDNDYHRSDEQVSICLECNSSKLRGLKRKWIRCSAQATVLHLKKFIAKKLNLSSFNELDILCNEEILGKDHTLKFVVVTRWRFKKAPLLLHYRPKMDLL.

The RING-type zinc-finger motif lies at 17–56 (CRLCSGYLIDATTVTECLHTFCRSCLVKYLEENNTCPTCR). Residues 115 to 148 (AKQHLDPRNGETKADDNSNKETAEEKQEEDNDYH) are disordered. The segment covering 117–139 (QHLDPRNGETKADDNSNKETAEE) has biased composition (basic and acidic residues). The interaction with BCORL1 stretch occupies residues 131–241 (NSNKETAEEK…LHYRPKMDLL (111 aa)).

In terms of assembly, component of a PRC1-like complex that contains PCGF3, RNF2 and RYBP. Interacts with RNF2. Interacts with CBX6, CBX7 and CBX8. Interacts with BCORL1.

It is found in the nucleus. The protein localises to the nucleoplasm. Its function is as follows. Component of a Polycomb group (PcG) multiprotein PRC1-like complex, a complex class required to maintain the transcriptionally repressive state of many genes, including Hox genes, throughout development. PcG PRC1 complex acts via chromatin remodeling and modification of histones; it mediates monoubiquitination of histone H2A 'Lys-119', rendering chromatin heritably changed in its expressibility. Within the PRC1-like complex, regulates RNF2 ubiquitin ligase activity. Plays a redundant role with PCGF5 as part of a PRC1-like complex that mediates monoubiquitination of histone H2A 'Lys-119' on the X chromosome and is required for normal silencing of one copy of the X chromosome in XX females. The sequence is that of Polycomb group RING finger protein 3 (PcgF3) from Mus musculus (Mouse).